Here is a 210-residue protein sequence, read N- to C-terminus: HTH-type transcriptional regulator MtrR (210 aa).

One can recognise an HTH tetR-type domain in the interval 9 to 69; that stretch reads LKTKEHLMLA…ALFQRICDDI (61 aa). Residues 32–51 constitute a DNA-binding region (H-T-H motif); sequence SLNEIAQAAGVTRGALYWHF.

In terms of assembly, homodimer. Binds to DNA as a pair of dimers.

With respect to regulation, DNA binding is affected significantly by increasing the NaCl concentration. Functionally, controls the permeability of the cell envelope to hydrophobic compounds such as antibiotics and detergents. Represses transcription of the mtrCDE-encoded efflux pump by binding within the mtrCDE promoter. Also negatively regulates the expression of farR, by binding to its promoter region, leading indirectly to the positive regulation of expression of the farAB-encoded efflux pump. The sequence is that of HTH-type transcriptional regulator MtrR from Neisseria gonorrhoeae.